A 379-amino-acid chain; its full sequence is 1-deoxy-D-xylulose 5-phosphate reductoisomerase (379 aa).

Threonine 10, glycine 11, serine 12, isoleucine 13, glycine 36, asparagine 38, and asparagine 121 together coordinate NADPH. Position 122 (lysine 122) interacts with 1-deoxy-D-xylulose 5-phosphate. Glutamate 123 serves as a coordination point for NADPH. Aspartate 147 contributes to the Mn(2+) binding site. The 1-deoxy-D-xylulose 5-phosphate site is built by serine 148, glutamate 149, serine 173, and histidine 196. Glutamate 149 serves as a coordination point for Mn(2+). Glycine 202 provides a ligand contact to NADPH. Residues serine 209, asparagine 214, lysine 215, and glutamate 218 each contribute to the 1-deoxy-D-xylulose 5-phosphate site. Glutamate 218 is a binding site for Mn(2+).

The protein belongs to the DXR family. Mg(2+) is required as a cofactor. Mn(2+) serves as cofactor.

It carries out the reaction 2-C-methyl-D-erythritol 4-phosphate + NADP(+) = 1-deoxy-D-xylulose 5-phosphate + NADPH + H(+). The protein operates within isoprenoid biosynthesis; isopentenyl diphosphate biosynthesis via DXP pathway; isopentenyl diphosphate from 1-deoxy-D-xylulose 5-phosphate: step 1/6. Functionally, catalyzes the NADPH-dependent rearrangement and reduction of 1-deoxy-D-xylulose-5-phosphate (DXP) to 2-C-methyl-D-erythritol 4-phosphate (MEP). The chain is 1-deoxy-D-xylulose 5-phosphate reductoisomerase from Shouchella clausii (strain KSM-K16) (Alkalihalobacillus clausii).